Here is a 431-residue protein sequence, read N- to C-terminus: Tyrosine--tRNA ligase (431 aa).

Tyr-34 serves as a coordination point for L-tyrosine. The 'HIGH' region signature appears at Pro-39–His-48. Residues Tyr-171 and Gln-175 each contribute to the L-tyrosine site. The 'KMSKS' region motif lies at Lys-231–Thr-235. Lys-234 provides a ligand contact to ATP. Positions Ile-353–Lys-422 constitute an S4 RNA-binding domain.

Belongs to the class-I aminoacyl-tRNA synthetase family. TyrS type 1 subfamily. Homodimer.

The protein localises to the cytoplasm. The catalysed reaction is tRNA(Tyr) + L-tyrosine + ATP = L-tyrosyl-tRNA(Tyr) + AMP + diphosphate + H(+). Catalyzes the attachment of tyrosine to tRNA(Tyr) in a two-step reaction: tyrosine is first activated by ATP to form Tyr-AMP and then transferred to the acceptor end of tRNA(Tyr). The chain is Tyrosine--tRNA ligase from Neisseria meningitidis serogroup A / serotype 4A (strain DSM 15465 / Z2491).